Consider the following 434-residue polypeptide: Alpha-enolase (434 aa).

A Mg(2+)-binding site is contributed by S40. Substrate is bound by residues H158 and E167. The active-site Proton donor is the E210. Residues D245, E293, and D318 each coordinate Mg(2+). Substrate-binding positions include E293, D318, 370–373 (SHRS), and K394.

This sequence belongs to the enolase family. In terms of assembly, homodimer. The cofactor is Mg(2+).

The protein resides in the cytoplasm. The enzyme catalyses (2R)-2-phosphoglycerate = phosphoenolpyruvate + H2O. Its pathway is carbohydrate degradation; glycolysis; pyruvate from D-glyceraldehyde 3-phosphate: step 4/5. This chain is Alpha-enolase, found in Trachemys scripta elegans (Red-eared slider turtle).